The following is a 168-amino-acid chain: ATP synthase subunit b (168 aa).

A helical transmembrane segment spans residues 10–30 (LYLGDMLFYLVSFLIMAALVW). The interval 61 to 80 (EAQKLAAKRQEELKGSRQEA) is disordered.

The protein belongs to the ATPase B chain family. As to quaternary structure, F-type ATPases have 2 components, F(1) - the catalytic core - and F(0) - the membrane proton channel. F(1) has five subunits: alpha(3), beta(3), gamma(1), delta(1), epsilon(1). F(0) has three main subunits: a(1), b(2) and c(10-14). The alpha and beta chains form an alternating ring which encloses part of the gamma chain. F(1) is attached to F(0) by a central stalk formed by the gamma and epsilon chains, while a peripheral stalk is formed by the delta and b chains.

The protein resides in the cell membrane. In terms of biological role, f(1)F(0) ATP synthase produces ATP from ADP in the presence of a proton or sodium gradient. F-type ATPases consist of two structural domains, F(1) containing the extramembraneous catalytic core and F(0) containing the membrane proton channel, linked together by a central stalk and a peripheral stalk. During catalysis, ATP synthesis in the catalytic domain of F(1) is coupled via a rotary mechanism of the central stalk subunits to proton translocation. Component of the F(0) channel, it forms part of the peripheral stalk, linking F(1) to F(0). The sequence is that of ATP synthase subunit b from Limosilactobacillus fermentum (strain NBRC 3956 / LMG 18251) (Lactobacillus fermentum).